Here is a 333-residue protein sequence, read N- to C-terminus: Ferredoxin--NADP reductase (333 aa).

Aspartate 32, glutamine 40, tyrosine 45, alanine 85, phenylalanine 119, aspartate 285, and threonine 326 together coordinate FAD.

Belongs to the ferredoxin--NADP reductase type 2 family. As to quaternary structure, homodimer. The cofactor is FAD.

It carries out the reaction 2 reduced [2Fe-2S]-[ferredoxin] + NADP(+) + H(+) = 2 oxidized [2Fe-2S]-[ferredoxin] + NADPH. The chain is Ferredoxin--NADP reductase from Neorickettsia sennetsu (strain ATCC VR-367 / Miyayama) (Ehrlichia sennetsu).